The primary structure comprises 125 residues: Large ribosomal subunit protein bL12 (125 aa).

This sequence belongs to the bacterial ribosomal protein bL12 family. As to quaternary structure, homodimer. Part of the ribosomal stalk of the 50S ribosomal subunit. Forms a multimeric L10(L12)X complex, where L10 forms an elongated spine to which 2 to 4 L12 dimers bind in a sequential fashion. Binds GTP-bound translation factors.

Its function is as follows. Forms part of the ribosomal stalk which helps the ribosome interact with GTP-bound translation factors. Is thus essential for accurate translation. In Thioalkalivibrio sulfidiphilus (strain HL-EbGR7), this protein is Large ribosomal subunit protein bL12.